Reading from the N-terminus, the 362-residue chain is Probable dual-specificity RNA methyltransferase RlmN (362 aa).

The Proton acceptor role is filled by Glu105. Positions 111-344 (HEYGNSICVT…VTIRREQGHD (234 aa)) constitute a Radical SAM core domain. The cysteines at positions 118 and 349 are disulfide-linked. [4Fe-4S] cluster-binding residues include Cys125, Cys129, and Cys132. S-adenosyl-L-methionine contacts are provided by residues 175–176 (GE), Ser207, 230–232 (SLH), and Asn306. Cys349 serves as the catalytic S-methylcysteine intermediate.

The protein belongs to the radical SAM superfamily. RlmN family. Requires [4Fe-4S] cluster as cofactor.

The protein localises to the cytoplasm. The catalysed reaction is adenosine(2503) in 23S rRNA + 2 reduced [2Fe-2S]-[ferredoxin] + 2 S-adenosyl-L-methionine = 2-methyladenosine(2503) in 23S rRNA + 5'-deoxyadenosine + L-methionine + 2 oxidized [2Fe-2S]-[ferredoxin] + S-adenosyl-L-homocysteine. It catalyses the reaction adenosine(37) in tRNA + 2 reduced [2Fe-2S]-[ferredoxin] + 2 S-adenosyl-L-methionine = 2-methyladenosine(37) in tRNA + 5'-deoxyadenosine + L-methionine + 2 oxidized [2Fe-2S]-[ferredoxin] + S-adenosyl-L-homocysteine. Specifically methylates position 2 of adenine 2503 in 23S rRNA and position 2 of adenine 37 in tRNAs. The protein is Probable dual-specificity RNA methyltransferase RlmN of Bacillus cytotoxicus (strain DSM 22905 / CIP 110041 / 391-98 / NVH 391-98).